We begin with the raw amino-acid sequence, 391 residues long: MSVTFAQGFSAAGVAAGISSVEGKKDLALVVNNGPLDAAAGVFTSNRFCAAPVQWSRKVVADGHVKAVILNSGGANACTGEAGYAQSVATAETVAGLIGAEPNDVAVCSTGLIGELLPLDNVLAGAKSAHEALAATAEAGTDASHAIMTTDTKPKTVELTGSNGWKIGGMVKGSGMIAPQLATMLCVITTDAVVSAGQMQAALAVAAEHSFNRIDVDGCMSTNDTVLLLASGASGIEPDKDEFNKLVREACASLSRQIIGDGEGASHDIRITVTGATSEDAALACGRAVAASNLLKCAISGNDPNWGRIVSSLGTVPPEVAPYDSNKVTVDVNGVRICENGGAGRDRSEVDMTPREVHIDIDLNTGSDAEATVWTDDLTHEYVHINADYES.

Substrate contacts are provided by Thr-149, Lys-172, Thr-183, Glu-263, Asn-386, and Ser-391. Thr-183 serves as the catalytic Nucleophile.

This sequence belongs to the ArgJ family. As to quaternary structure, heterotetramer of two alpha and two beta chains.

Its subcellular location is the cytoplasm. It catalyses the reaction N(2)-acetyl-L-ornithine + L-glutamate = N-acetyl-L-glutamate + L-ornithine. The enzyme catalyses L-glutamate + acetyl-CoA = N-acetyl-L-glutamate + CoA + H(+). It participates in amino-acid biosynthesis; L-arginine biosynthesis; L-ornithine and N-acetyl-L-glutamate from L-glutamate and N(2)-acetyl-L-ornithine (cyclic): step 1/1. The protein operates within amino-acid biosynthesis; L-arginine biosynthesis; N(2)-acetyl-L-ornithine from L-glutamate: step 1/4. Its function is as follows. Catalyzes two activities which are involved in the cyclic version of arginine biosynthesis: the synthesis of N-acetylglutamate from glutamate and acetyl-CoA as the acetyl donor, and of ornithine by transacetylation between N(2)-acetylornithine and glutamate. This is Arginine biosynthesis bifunctional protein ArgJ from Bifidobacterium longum (strain NCC 2705).